A 71-amino-acid chain; its full sequence is Small ribosomal subunit protein bS21 (71 aa).

This sequence belongs to the bacterial ribosomal protein bS21 family.

The protein is Small ribosomal subunit protein bS21 of Cellvibrio japonicus (strain Ueda107) (Pseudomonas fluorescens subsp. cellulosa).